A 354-amino-acid chain; its full sequence is Uroporphyrinogen decarboxylase (354 aa).

Residues 27-31 (RQAGR), aspartate 77, tyrosine 154, serine 209, and histidine 327 contribute to the substrate site.

The protein belongs to the uroporphyrinogen decarboxylase family. As to quaternary structure, homodimer.

The protein resides in the cytoplasm. The enzyme catalyses uroporphyrinogen III + 4 H(+) = coproporphyrinogen III + 4 CO2. Its pathway is porphyrin-containing compound metabolism; protoporphyrin-IX biosynthesis; coproporphyrinogen-III from 5-aminolevulinate: step 4/4. Functionally, catalyzes the decarboxylation of four acetate groups of uroporphyrinogen-III to yield coproporphyrinogen-III. The protein is Uroporphyrinogen decarboxylase of Shewanella loihica (strain ATCC BAA-1088 / PV-4).